Reading from the N-terminus, the 105-residue chain is MILLKLYLTLAAILCQSRGTTSLDLDDLMTTNPEIQNEIINKHNDLRRTVDPPAKNMLKMSWGQHHCRECQTCSTEMQPKMSTHPVSGRKIGWVWVCGGKLLHVK.

Residues 1-22 (MILLKLYLTLAAILCQSRGTTS) form the signal peptide.

The protein belongs to the CRISP family. Contains 8 disulfide bonds. In terms of tissue distribution, expressed by the venom gland.

The protein localises to the secreted. Its function is as follows. Blocks ryanodine receptors, and potassium channels. This Varanus acanthurus (Ridge-tailed monitor) protein is Cysteine-rich venom protein VAR2.